We begin with the raw amino-acid sequence, 167 residues long: NAD(P)H-quinone oxidoreductase subunit I, chloroplastic (167 aa).

4Fe-4S ferredoxin-type domains are found at residues 55 to 84 and 95 to 124; these read GRIH…VDWK and LNYS…MTEE. [4Fe-4S] cluster contacts are provided by Cys64, Cys67, Cys70, Cys74, Cys104, Cys107, Cys110, and Cys114.

It belongs to the complex I 23 kDa subunit family. As to quaternary structure, NDH is composed of at least 16 different subunits, 5 of which are encoded in the nucleus. [4Fe-4S] cluster serves as cofactor.

The protein resides in the plastid. It localises to the chloroplast thylakoid membrane. The catalysed reaction is a plastoquinone + NADH + (n+1) H(+)(in) = a plastoquinol + NAD(+) + n H(+)(out). The enzyme catalyses a plastoquinone + NADPH + (n+1) H(+)(in) = a plastoquinol + NADP(+) + n H(+)(out). Its function is as follows. NDH shuttles electrons from NAD(P)H:plastoquinone, via FMN and iron-sulfur (Fe-S) centers, to quinones in the photosynthetic chain and possibly in a chloroplast respiratory chain. The immediate electron acceptor for the enzyme in this species is believed to be plastoquinone. Couples the redox reaction to proton translocation, and thus conserves the redox energy in a proton gradient. The chain is NAD(P)H-quinone oxidoreductase subunit I, chloroplastic from Gossypium barbadense (Sea Island cotton).